The sequence spans 428 residues: Glutamate-1-semialdehyde 2,1-aminomutase (428 aa).

At Lys-267 the chain carries N6-(pyridoxal phosphate)lysine.

Belongs to the class-III pyridoxal-phosphate-dependent aminotransferase family. HemL subfamily. As to quaternary structure, homodimer. It depends on pyridoxal 5'-phosphate as a cofactor.

It is found in the cytoplasm. The enzyme catalyses (S)-4-amino-5-oxopentanoate = 5-aminolevulinate. It participates in porphyrin-containing compound metabolism; protoporphyrin-IX biosynthesis; 5-aminolevulinate from L-glutamyl-tRNA(Glu): step 2/2. The sequence is that of Glutamate-1-semialdehyde 2,1-aminomutase from Flavobacterium psychrophilum (strain ATCC 49511 / DSM 21280 / CIP 103535 / JIP02/86).